We begin with the raw amino-acid sequence, 467 residues long: tRNA(Ile)-lysidine synthase (467 aa).

ATP is bound at residue 26–31 (SGGPDS).

Belongs to the tRNA(Ile)-lysidine synthase family.

Its subcellular location is the cytoplasm. It carries out the reaction cytidine(34) in tRNA(Ile2) + L-lysine + ATP = lysidine(34) in tRNA(Ile2) + AMP + diphosphate + H(+). In terms of biological role, ligates lysine onto the cytidine present at position 34 of the AUA codon-specific tRNA(Ile) that contains the anticodon CAU, in an ATP-dependent manner. Cytidine is converted to lysidine, thus changing the amino acid specificity of the tRNA from methionine to isoleucine. The chain is tRNA(Ile)-lysidine synthase from Clostridium tetani (strain Massachusetts / E88).